The following is a 751-amino-acid chain: Catalase-peroxidase (751 aa).

The first 12 residues, 1 to 12, serve as a signal peptide directing secretion; the sequence is MSNETKCPFSHA. The segment at residues 91–241 is a cross-link (tryptophyl-tyrosyl-methioninium (Trp-Tyr) (with M-267)); it reads WHSAGTYRIG…LAAVQMGLIY (151 aa). Catalysis depends on His92, which acts as the Proton acceptor. Positions 241–267 form a cross-link, tryptophyl-tyrosyl-methioninium (Tyr-Met) (with W-91); the sequence is YVNPEGPDGNPDPLAAAHDIRESFGRM. Heme b is bound at residue His282.

This sequence belongs to the peroxidase family. Peroxidase/catalase subfamily. In terms of assembly, homodimer or homotetramer. The cofactor is heme b. Formation of the three residue Trp-Tyr-Met cross-link is important for the catalase, but not the peroxidase activity of the enzyme.

It carries out the reaction H2O2 + AH2 = A + 2 H2O. The enzyme catalyses 2 H2O2 = O2 + 2 H2O. Functionally, bifunctional enzyme with both catalase and broad-spectrum peroxidase activity. This chain is Catalase-peroxidase, found in Cupriavidus necator (strain ATCC 17699 / DSM 428 / KCTC 22496 / NCIMB 10442 / H16 / Stanier 337) (Ralstonia eutropha).